Here is a 288-residue protein sequence, read N- to C-terminus: tRNA dimethylallyltransferase (288 aa).

An ATP-binding site is contributed by glycine 17 to threonine 24. Threonine 19 to threonine 24 is a substrate binding site.

It belongs to the IPP transferase family. As to quaternary structure, monomer. The cofactor is Mg(2+).

The catalysed reaction is adenosine(37) in tRNA + dimethylallyl diphosphate = N(6)-dimethylallyladenosine(37) in tRNA + diphosphate. Catalyzes the transfer of a dimethylallyl group onto the adenine at position 37 in tRNAs that read codons beginning with uridine, leading to the formation of N6-(dimethylallyl)adenosine (i(6)A). In Jannaschia sp. (strain CCS1), this protein is tRNA dimethylallyltransferase.